Here is a 1275-residue protein sequence, read N- to C-terminus: Mediator of RNA polymerase II transcription subunit 33B (1275 aa).

The segment covering glycine 772–aspartate 791 has biased composition (low complexity). A disordered region spans residues glycine 772–aspartate 792.

It belongs to the Mediator complex subunit 33 family. As to quaternary structure, component of the Mediator complex. Ubiquitous.

The protein localises to the nucleus. In terms of biological role, component of the Mediator complex, a coactivator involved in the regulated transcription of nearly all RNA polymerase II-dependent genes. Mediator functions as a bridge to convey information from gene-specific regulatory proteins to the basal RNA polymerase II transcription machinery. The Mediator complex, having a compact conformation in its free form, is recruited to promoters by direct interactions with regulatory proteins and serves for the assembly of a functional preinitiation complex with RNA polymerase II and the general transcription factors. Involved in the repression of phenylpropanoid biosynthesis. May compete with MED33B for common binding partners or for occupancy in Mediator. This Arabidopsis thaliana (Mouse-ear cress) protein is Mediator of RNA polymerase II transcription subunit 33B (MED33B).